The sequence spans 57 residues: Large ribosomal subunit protein bL32c (57 aa).

This sequence belongs to the bacterial ribosomal protein bL32 family.

The protein resides in the plastid. It is found in the chloroplast. The polypeptide is Large ribosomal subunit protein bL32c (Amborella trichopoda).